Reading from the N-terminus, the 433-residue chain is Pyrimidine-nucleoside phosphorylase (433 aa).

81-83 (KHS) contacts phosphate. Gly88 and Thr90 together coordinate K(+). Phosphate-binding positions include Thr92, 108–110 (KMS), and Thr120. The substrate site is built by Arg168 and Lys187. Leu243, Ala246, and Glu255 together coordinate K(+).

Belongs to the thymidine/pyrimidine-nucleoside phosphorylase family. Homodimer. K(+) serves as cofactor.

It catalyses the reaction uridine + phosphate = alpha-D-ribose 1-phosphate + uracil. The enzyme catalyses thymidine + phosphate = 2-deoxy-alpha-D-ribose 1-phosphate + thymine. It carries out the reaction 2'-deoxyuridine + phosphate = 2-deoxy-alpha-D-ribose 1-phosphate + uracil. Its function is as follows. Catalyzes phosphorolysis of the pyrimidine nucleosides uridine, thymidine and 2'-deoxyuridine with the formation of the corresponding pyrimidine base and ribose-1-phosphate. The sequence is that of Pyrimidine-nucleoside phosphorylase (pdp) from Geobacillus stearothermophilus (Bacillus stearothermophilus).